The following is a 269-amino-acid chain: [LysW]-aminoadipate kinase (269 aa).

Residue 5-8 (KVGG) coordinates ATP. Arg64 serves as a coordination point for substrate. Tyr78 lines the ATP pocket. A substrate-binding site is contributed by Asn168.

It belongs to the acetylglutamate kinase family. LysZ subfamily.

The protein localises to the cytoplasm. It catalyses the reaction [amino-group carrier protein]-C-terminal-N-(1,4-dicarboxybutan-1-yl)-L-glutamine + ATP = [amino-group carrier protein]-C-terminal-N-(1-carboxy-5-phosphooxy-5-oxopentan-1-yl)-L-glutamine + ADP. It functions in the pathway amino-acid biosynthesis; L-lysine biosynthesis via AAA pathway; L-lysine from L-alpha-aminoadipate (Thermus route): step 2/5. Catalyzes the phosphorylation of LysW-gamma-alpha-aminoadipate. Does not phosphorylate N-acetyl-glutamate. The polypeptide is [LysW]-aminoadipate kinase (Thermus thermophilus (strain ATCC BAA-163 / DSM 7039 / HB27)).